We begin with the raw amino-acid sequence, 188 residues long: Elongation factor P (188 aa).

The protein belongs to the elongation factor P family.

The protein localises to the cytoplasm. The protein operates within protein biosynthesis; polypeptide chain elongation. Functionally, involved in peptide bond synthesis. Stimulates efficient translation and peptide-bond synthesis on native or reconstituted 70S ribosomes in vitro. Probably functions indirectly by altering the affinity of the ribosome for aminoacyl-tRNA, thus increasing their reactivity as acceptors for peptidyl transferase. This Wolbachia pipientis subsp. Culex pipiens (strain wPip) protein is Elongation factor P.